Reading from the N-terminus, the 418-residue chain is Outer membrane protein assembly factor BamB (418 aa).

A signal peptide spans 1 to 28; it reads MFHNTCGRKGRFARAMGMALAISVTLSG. A lipid anchor (N-palmitoyl cysteine) is attached at Cys29. A lipid anchor (S-diacylglycerol cysteine) is attached at Cys29.

This sequence belongs to the BamB family. As to quaternary structure, part of the Bam complex.

It localises to the cell outer membrane. Its function is as follows. Part of the outer membrane protein assembly complex, which is involved in assembly and insertion of beta-barrel proteins into the outer membrane. This chain is Outer membrane protein assembly factor BamB, found in Alteromonas naphthalenivorans.